Consider the following 772-residue polypeptide: Polyribonucleotide nucleotidyltransferase (772 aa).

Residues Asp-488 and Asp-494 each coordinate Mg(2+). A KH domain is found at 555 to 614; it reads PRLTTLKINPEKIRDVIGKGGAVIRGLQEETGTTINIDEDGTITIASTDPEKAEFAKKRI. In terms of domain architecture, S1 motif spans 624–692; the sequence is GKVYEGPVTK…EKGRVKLSMK (69 aa). Positions 690–772 are disordered; sequence SMKALTERPA…QPYAPRDSQE (83 aa). Positions 703–740 are enriched in basic and acidic residues; sequence YSERPPREDRGDRGDRGGERRERSDRGDRGGDRGERAP. Over residues 743-757 the composition is skewed to low complexity; that stretch reads NSEQQQQPRSNEQQP.

The protein belongs to the polyribonucleotide nucleotidyltransferase family. The cofactor is Mg(2+).

The protein localises to the cytoplasm. The catalysed reaction is RNA(n+1) + phosphate = RNA(n) + a ribonucleoside 5'-diphosphate. In terms of biological role, involved in mRNA degradation. Catalyzes the phosphorolysis of single-stranded polyribonucleotides processively in the 3'- to 5'-direction. In Variovorax paradoxus (strain S110), this protein is Polyribonucleotide nucleotidyltransferase.